The following is a 520-amino-acid chain: GMP synthase [glutamine-hydrolyzing] (520 aa).

The 194-residue stretch at 12-205 (KIIVLDYGSQ…AISICGARGD (194 aa)) folds into the Glutamine amidotransferase type-1 domain. Cys89 (nucleophile) is an active-site residue. Active-site residues include His179 and Glu181. The region spanning 206–395 (WSMDNFIDME…LGMPEEIVWR (190 aa)) is the GMPS ATP-PPase domain. 233–239 (SGGVDSS) is an ATP binding site.

In terms of assembly, homodimer.

The enzyme catalyses XMP + L-glutamine + ATP + H2O = GMP + L-glutamate + AMP + diphosphate + 2 H(+). The protein operates within purine metabolism; GMP biosynthesis; GMP from XMP (L-Gln route): step 1/1. Catalyzes the synthesis of GMP from XMP. The chain is GMP synthase [glutamine-hydrolyzing] from Streptococcus pyogenes serotype M6 (strain ATCC BAA-946 / MGAS10394).